A 656-amino-acid polypeptide reads, in one-letter code: DNA topoisomerase 3 (656 aa).

A Toprim domain is found at Lys2–Leu156. One can recognise a Topo IA-type catalytic domain in the interval Asp172 to Trp635. Residue Tyr356 is the O-(5'-phospho-DNA)-tyrosine intermediate of the active site.

This sequence belongs to the type IA topoisomerase family. In terms of assembly, forms a complex with SGS1 and RMI1. Interacts with SGS1.

It carries out the reaction ATP-independent breakage of single-stranded DNA, followed by passage and rejoining.. In terms of biological role, releases the supercoiling and torsional tension of DNA introduced during the DNA replication and transcription by transiently cleaving and rejoining one strand of the DNA duplex. Introduces a single-strand break via transesterification at a target site in duplex DNA. The scissile phosphodiester is attacked by the catalytic tyrosine of the enzyme, resulting in the formation of a DNA-(5'-phosphotyrosyl)-enzyme intermediate and the expulsion of a 3'-OH DNA strand. The free DNA strand than undergoes passage around the unbroken strand thus removing DNA supercoils. Finally, in the religation step, the DNA 3'-OH attacks the covalent intermediate to expel the active-site tyrosine and restore the DNA phosphodiester backbone. Essential for proper chromosome segregation in both meiosis and mitosis. Weakly relaxes negative supercoils and displays a distinct preference for binding single-stranded DNA. The TOP3-SGS1 protein complex may function as a eukaryotic reverse gyrase introducing positive supercoils into extrachromosomal ribosomal DNA rings. The polypeptide is DNA topoisomerase 3 (TOP3) (Saccharomyces cerevisiae (strain ATCC 204508 / S288c) (Baker's yeast)).